A 113-amino-acid chain; its full sequence is Cell wall protein PGA59 (113 aa).

Positions 1–18 (MQFSSAIILSAVAGSALA) are cleaved as a signal peptide. Residues N22 and N80 are each glycosylated (N-linked (GlcNAc...) asparagine). Residue G92 is the site of GPI-anchor amidated glycine attachment. Residues 93-113 (AAAANAVPAVAAGLLALGAFM) constitute a propeptide, removed in mature form.

The protein belongs to the HWP1 family. In terms of processing, N- and O-glycosylated. Post-translationally, the GPI-anchor is attached to the protein in the endoplasmic reticulum and serves to target the protein to the cell surface. There, the glucosamine-inositol phospholipid moiety is cleaved off and the GPI-modified mannoprotein is covalently attached via its lipidless GPI glycan remnant to the 1,6-beta-glucan of the outer cell wall layer.

It localises to the secreted. Its subcellular location is the cell wall. It is found in the membrane. In terms of biological role, cell wall protein necessary for cell wall integrity. Plays only a minor role in hyphal morphogenesis and is not critical to biofilm formation. The polypeptide is Cell wall protein PGA59 (PGA59) (Candida albicans (strain SC5314 / ATCC MYA-2876) (Yeast)).